The sequence spans 442 residues: Trigger factor (442 aa).

The PPIase FKBP-type domain maps to 165 to 250 (DDRVIIDFEG…LQKVMAPELP (86 aa)).

It belongs to the FKBP-type PPIase family. Tig subfamily.

Its subcellular location is the cytoplasm. It catalyses the reaction [protein]-peptidylproline (omega=180) = [protein]-peptidylproline (omega=0). Involved in protein export. Acts as a chaperone by maintaining the newly synthesized protein in an open conformation. Functions as a peptidyl-prolyl cis-trans isomerase. This Coxiella burnetii (strain RSA 493 / Nine Mile phase I) protein is Trigger factor.